A 294-amino-acid chain; its full sequence is Cyclin-dependent kinase A-1 (294 aa).

In terms of domain architecture, Protein kinase spans 4-287 (YEKEEKIGEG…ARQALEHEYF (284 aa)). Residues 10 to 18 (IGEGTYGVV) and lysine 33 contribute to the ATP site. Position 14 is a phosphothreonine (threonine 14). A Phosphotyrosine modification is found at tyrosine 15. The active-site Proton acceptor is aspartate 127. Threonine 161 is modified (phosphothreonine; by CAK).

This sequence belongs to the protein kinase superfamily. CMGC Ser/Thr protein kinase family. CDC2/CDKX subfamily. Post-translationally, phosphorylated at Thr-161 by CDKD-1. In terms of tissue distribution, expressed in the dividing region of the root apex and in differentiated cells such as those in the sclerenchyma, pericycle and parenchyma of the central cylinder.

The catalysed reaction is L-seryl-[protein] + ATP = O-phospho-L-seryl-[protein] + ADP + H(+). The enzyme catalyses L-threonyl-[protein] + ATP = O-phospho-L-threonyl-[protein] + ADP + H(+). It carries out the reaction [DNA-directed RNA polymerase] + ATP = phospho-[DNA-directed RNA polymerase] + ADP + H(+). The chain is Cyclin-dependent kinase A-1 (CDKA-1) from Oryza sativa subsp. japonica (Rice).